A 983-amino-acid polypeptide reads, in one-letter code: ABC transporter A family member 2 (983 aa).

6 consecutive transmembrane segments (helical) span residues 33–53 (FLQL…QAAM), 221–241 (IVAL…FGFV), 279–299 (ILTA…QFDF), 305–325 (FPVV…LAFM), 339–359 (VGFF…SGFP), and 416–436 (VLTI…WFVL). Residues 518-763 (VQIRGLAKTY…FGTGFIANIS (246 aa)) enclose the ABC transporter domain. 564–571 (GPNGAGKT) contacts ATP. The disordered stretch occupies residues 963 to 983 (RSGSTSSRRFSRSGSSRRFSS).

It belongs to the ABC transporter superfamily. ABCA family. CPR flippase (TC 3.A.1.211) subfamily.

Its subcellular location is the membrane. The chain is ABC transporter A family member 2 (ABCA2) from Arabidopsis thaliana (Mouse-ear cress).